We begin with the raw amino-acid sequence, 313 residues long: tRNA-cytidine(32) 2-sulfurtransferase (313 aa).

The PP-loop motif motif lies at 47–52 (SGGKDS). [4Fe-4S] cluster-binding residues include Cys-122, Cys-125, and Cys-213.

It belongs to the TtcA family. Homodimer. It depends on Mg(2+) as a cofactor. [4Fe-4S] cluster is required as a cofactor.

It localises to the cytoplasm. The catalysed reaction is cytidine(32) in tRNA + S-sulfanyl-L-cysteinyl-[cysteine desulfurase] + AH2 + ATP = 2-thiocytidine(32) in tRNA + L-cysteinyl-[cysteine desulfurase] + A + AMP + diphosphate + H(+). The protein operates within tRNA modification. Functionally, catalyzes the ATP-dependent 2-thiolation of cytidine in position 32 of tRNA, to form 2-thiocytidine (s(2)C32). The sulfur atoms are provided by the cysteine/cysteine desulfurase (IscS) system. This is tRNA-cytidine(32) 2-sulfurtransferase from Yersinia pseudotuberculosis serotype IB (strain PB1/+).